The sequence spans 54 residues: uncharacterized protein (54 aa).

Residues 1–54 (MWTLKARKEHTGISGKPTARTDRHGSTRSGDSELQASARRFSRLPDRCGAQGVT) form a disordered region.

This is an uncharacterized protein from Mycobacterium tuberculosis (strain ATCC 25618 / H37Rv).